Consider the following 430-residue polypeptide: UDP-N-acetylglucosamine 1-carboxyvinyltransferase 1 (430 aa).

Phosphoenolpyruvate is bound at residue 22 to 23 (KN). Arginine 102 is a UDP-N-acetyl-alpha-D-glucosamine binding site. Residue cysteine 126 is the Proton donor of the active site. At cysteine 126 the chain carries 2-(S-cysteinyl)pyruvic acid O-phosphothioketal. UDP-N-acetyl-alpha-D-glucosamine contacts are provided by residues 131–135 (RPVDL), 172–175 (KVSV), aspartate 317, and isoleucine 339.

The protein belongs to the EPSP synthase family. MurA subfamily.

It localises to the cytoplasm. It carries out the reaction phosphoenolpyruvate + UDP-N-acetyl-alpha-D-glucosamine = UDP-N-acetyl-3-O-(1-carboxyvinyl)-alpha-D-glucosamine + phosphate. It participates in cell wall biogenesis; peptidoglycan biosynthesis. In terms of biological role, cell wall formation. Adds enolpyruvyl to UDP-N-acetylglucosamine. This is UDP-N-acetylglucosamine 1-carboxyvinyltransferase 1 from Mesorhizobium japonicum (strain LMG 29417 / CECT 9101 / MAFF 303099) (Mesorhizobium loti (strain MAFF 303099)).